A 503-amino-acid chain; its full sequence is Cytochrome P450 3A43 (503 aa).

Cysteine 442 is a heme binding site.

The protein belongs to the cytochrome P450 family. Heme is required as a cofactor. In terms of tissue distribution, highest expression level in prostate. Also expressed in liver, kidney, pancreas, fetal liver and fetal skeletal muscle.

Its subcellular location is the endoplasmic reticulum membrane. It is found in the microsome membrane. The enzyme catalyses an organic molecule + reduced [NADPH--hemoprotein reductase] + O2 = an alcohol + oxidized [NADPH--hemoprotein reductase] + H2O + H(+). Exhibits low testosterone 6-beta-hydroxylase activity. The sequence is that of Cytochrome P450 3A43 (CYP3A43) from Homo sapiens (Human).